Here is a 200-residue protein sequence, read N- to C-terminus: Male-specific histamine-binding salivary protein (200 aa).

The first 18 residues, 1–18 (MKVLLLVLGAALCQNADA), serve as a signal peptide directing secretion. Histamine is bound by residues Ser-37, Asp-41, Asp-56, and Trp-59. Disulfide bonds link Cys-65–Cys-193 and Cys-137–Cys-169. An N-linked (GlcNAc...) asparagine glycan is attached at Asn-79. Residues Glu-97, Tyr-115, Phe-125, Asp-138, Glu-154, and Trp-156 each contribute to the histamine site.

It belongs to the calycin superfamily. Histamine-binding salivary protein family. In terms of assembly, homodimer; disulcde-linked. N-glycosylated. As to expression, expressed in salivary glands.

The protein localises to the secreted. In terms of biological role, salivary tick protein that acts by scavenging histamine at the wound site, outcompeting histamine receptors for histamine, thereby overcoming host inflammatory responses. Binds histamine with a high-affinity (Kd=1.2 nM). Contains two binding histamine sites (H and L), that appear to bind histamine with differing affinities. In Rhipicephalus appendiculatus (Brown ear tick), this protein is Male-specific histamine-binding salivary protein.